The primary structure comprises 524 residues: Peptide chain release factor 3 (524 aa).

The tr-type G domain maps to 9–275 (QRRRTFAIIS…AVVELSPPPL (267 aa)). Residues 18 to 25 (SHPDAGKT), 86 to 90 (DTPGH), and 140 to 143 (NKLD) contribute to the GTP site.

Belongs to the TRAFAC class translation factor GTPase superfamily. Classic translation factor GTPase family. PrfC subfamily.

The protein localises to the cytoplasm. Increases the formation of ribosomal termination complexes and stimulates activities of RF-1 and RF-2. It binds guanine nucleotides and has strong preference for UGA stop codons. It may interact directly with the ribosome. The stimulation of RF-1 and RF-2 is significantly reduced by GTP and GDP, but not by GMP. In Methylobacillus flagellatus (strain ATCC 51484 / DSM 6875 / VKM B-1610 / KT), this protein is Peptide chain release factor 3.